A 20-amino-acid polypeptide reads, in one-letter code: Unknown protein NF028 from 2D-PAGE (20 aa).

This is Unknown protein NF028 from 2D-PAGE from Naegleria fowleri (Brain eating amoeba).